Consider the following 187-residue polypeptide: Transmembrane protein 11-B, mitochondrial (187 aa).

Helical transmembrane passes span 79-95 (TAVL…LALP) and 102-119 (VSLP…LYGI).

This sequence belongs to the TMEM11 family.

The protein localises to the mitochondrion inner membrane. Plays a role in mitochondrial morphogenesis. The chain is Transmembrane protein 11-B, mitochondrial (tmem11-b) from Xenopus laevis (African clawed frog).